We begin with the raw amino-acid sequence, 540 residues long: Transcription initiation factor IIF subunit alpha (540 aa).

The span at 1–26 (MDSQETKVFENVKQENPDEKKPKVEE) shows a compositional bias: basic and acidic residues. Disordered stretches follow at residues 1–39 (MDSQETKVFENVKQENPDEKKPKVEEPDSQNNASTQSQQ) and 70–106 (IDPSKSFVPPIKMQRRDPNAPSSSNGEQNAEQGSSSN). Polar residues-rich tracts occupy residues 29–39 (SQNNASTQSQQ) and 89–106 (APSSSNGEQNAEQGSSSN). Phosphoserine occurs at positions 259 and 261. Positions 280-382 (MEGNEEDNKK…REEKLKSRFS (103 aa)) form a coiled coil. The segment at 341–416 (YESDEEDEDP…SSQLQSPNTS (76 aa)) is disordered. Residues 359–369 (SEEEVLQEEEE) show a composition bias toward acidic residues. Residues 381-416 (FSANASKTNTPRPLERTPSSVSPVKASSQLQSPNTS) are compositionally biased toward polar residues. The residue at position 399 (S399) is a Phosphoserine.

Belongs to the TFIIF alpha subunit family. In terms of assembly, component of the fcp1/TFIIF/polII complex via interaction of tfg3 with both tfg1/TFIIF-alpha and tfg2/TFIIF-beta subunits.

The protein localises to the nucleus. TFIIF is a general transcription initiation factor that binds to RNA polymerase II and helps to recruit it to the initiation complex in collaboration with TFIIB. It promotes transcription elongation. In Schizosaccharomyces pombe (strain 972 / ATCC 24843) (Fission yeast), this protein is Transcription initiation factor IIF subunit alpha (tfg1).